We begin with the raw amino-acid sequence, 457 residues long: Glycine receptor subunit alpha-1 (457 aa).

Positions 1-28 (MYSFNTLRLYLWETIVFFSLAASKEAEA) are cleaved as a signal peptide. Residues 29–250 (ARSASKPMSP…RFHLERQMGY (222 aa)) lie on the Extracellular side of the membrane. Asn-66 is a glycosylation site (N-linked (GlcNAc...) asparagine). The glycine site is built by Arg-93 and Ser-157. The cysteines at positions 166 and 180 are disulfide-linked. Zn(2+) contacts are provided by Glu-220 and Asp-222. Cys-226 and Cys-237 are joined by a disulfide. 230 to 235 (YNTGKF) is a binding site for strychnine. Thr-232 contributes to the glycine binding site. A Zn(2+)-binding site is contributed by His-243. A helical transmembrane segment spans residues 251–272 (YLIQMYIPSLLIVILSWISFWI). Residues 273–277 (NMDAA) lie on the Cytoplasmic side of the membrane. The chain crosses the membrane as a helical span at residues 278–298 (PARVGLGITTVLTMTTQSSGS). At 299–309 (RASLPKVSYVK) the chain is on the extracellular side. Residues 310-330 (AIDIWMAVCLLFVFSALLEYA) form a helical membrane-spanning segment. At 331–425 (AVNFVSRQHK…FIQRAKKIDK (95 aa)) the chain is on the cytoplasmic side. A disordered region spans residues 391–410 (KGANNSNTTNPPPAPSKSPE). The helical transmembrane segment at 426-446 (ISRIGFPMAFLIFNMFYWIIY) threads the bilayer. Over 447 to 457 (KIVRREDVHNQ) the chain is Extracellular.

This sequence belongs to the ligand-gated ion channel (TC 1.A.9) family. Glycine receptor (TC 1.A.9.3) subfamily. GLRA1 sub-subfamily. Interacts with GLRB to form heteropentameric channels; this is probably the predominant form in vivo. Heteropentamer composed of four GLRA1 subunits and one GLRB subunit. Heteropentamer composed of two GLRA1 and three GLRB. Heteropentamer composed of three GLRA1 and two GLRB. Homopentamer (in vitro). Both homopentamers and heteropentamers form functional ion channels, but their characteristics are subtly different. In terms of tissue distribution, detected on spinal cord neurons (at protein level). Detected in spinal cord.

The protein localises to the postsynaptic cell membrane. The protein resides in the synapse. Its subcellular location is the perikaryon. It localises to the cell projection. It is found in the dendrite. The protein localises to the cell membrane. The enzyme catalyses chloride(in) = chloride(out). Channel opening is triggered by extracellular glycine. Channel characteristics depend on the subunit composition; heteropentameric channels are activated by lower glycine levels and display faster desensitization. Its function is as follows. Subunit of heteromeric glycine-gated chloride channels. Plays an important role in the down-regulation of neuronal excitability. Contributes to the generation of inhibitory postsynaptic currents. Channel activity is potentiated by ethanol. Potentiation of channel activity by intoxicating levels of ethanol contribute to the sedative effects of ethanol. The sequence is that of Glycine receptor subunit alpha-1 (GLRA1) from Bos taurus (Bovine).